The sequence spans 60 residues: Cytotoxin 1 (60 aa).

4 cysteine pairs are disulfide-bonded: cysteine 3–cysteine 21, cysteine 14–cysteine 38, cysteine 42–cysteine 53, and cysteine 54–cysteine 59.

The protein belongs to the three-finger toxin family. Short-chain subfamily. Type IA cytotoxin sub-subfamily. Monomer in solution; Homodimer and oligomer in the presence of negatively charged lipids forming a pore with a size ranging between 20 and 30 Angstroms. Expressed by the venom gland.

The protein localises to the secreted. The protein resides in the target cell membrane. Its function is as follows. Shows cytolytic activity on many different cells by forming pore in lipid membranes. In vivo, increases heart rate or kills the animal by cardiac arrest. In addition, it binds to heparin with high affinity, interacts with Kv channel-interacting protein 1 (KCNIP1) in a calcium-independent manner, and binds to integrin alpha-V/beta-3 (ITGAV/ITGB3) with moderate affinity. In Naja melanoleuca (Forest cobra), this protein is Cytotoxin 1.